A 327-amino-acid chain; its full sequence is Glycerol-3-phosphate dehydrogenase [NAD(P)+] (327 aa).

Residues phenylalanine 13, arginine 34, and lysine 107 each coordinate NADPH. Sn-glycerol 3-phosphate contacts are provided by lysine 107 and glycine 135. Alanine 139 is a binding site for NADPH. Sn-glycerol 3-phosphate-binding residues include lysine 190, aspartate 243, serine 253, arginine 254, and asparagine 255. The active-site Proton acceptor is the lysine 190. An NADPH-binding site is contributed by arginine 254. NADPH is bound by residues valine 276 and glutamate 277.

This sequence belongs to the NAD-dependent glycerol-3-phosphate dehydrogenase family.

It localises to the cytoplasm. The catalysed reaction is sn-glycerol 3-phosphate + NAD(+) = dihydroxyacetone phosphate + NADH + H(+). It carries out the reaction sn-glycerol 3-phosphate + NADP(+) = dihydroxyacetone phosphate + NADPH + H(+). It functions in the pathway membrane lipid metabolism; glycerophospholipid metabolism. Catalyzes the reduction of the glycolytic intermediate dihydroxyacetone phosphate (DHAP) to sn-glycerol 3-phosphate (G3P), the key precursor for phospholipid synthesis. The sequence is that of Glycerol-3-phosphate dehydrogenase [NAD(P)+] from Rhizobium etli (strain ATCC 51251 / DSM 11541 / JCM 21823 / NBRC 15573 / CFN 42).